Consider the following 314-residue polypeptide: Mevalonate kinase (314 aa).

Residue 103 to 109 (GLGTSAA) coordinates ATP. The active-site Proton acceptor is the aspartate 150.

Belongs to the GHMP kinase family. Mevalonate kinase subfamily. Homodimer. It depends on Mg(2+) as a cofactor.

Its subcellular location is the cytoplasm. It carries out the reaction (R)-mevalonate + ATP = (R)-5-phosphomevalonate + ADP + H(+). The protein operates within isoprenoid biosynthesis; isopentenyl diphosphate biosynthesis via mevalonate pathway; isopentenyl diphosphate from (R)-mevalonate: step 1/3. Catalyzes the phosphorylation of (R)-mevalonate (MVA) to (R)-mevalonate 5-phosphate (MVAP). Functions in the mevalonate (MVA) pathway leading to isopentenyl diphosphate (IPP), a key precursor for the biosynthesis of isoprenoid compounds such as archaeal membrane lipids. This Saccharolobus solfataricus (strain ATCC 35092 / DSM 1617 / JCM 11322 / P2) (Sulfolobus solfataricus) protein is Mevalonate kinase.